A 376-amino-acid chain; its full sequence is Ribonucleoside-diphosphate reductase 1 subunit beta (376 aa).

Positions 85, 116, and 119 each coordinate Fe cation. Tyr-123 is an active-site residue. Residues Glu-205, Glu-239, and His-242 each contribute to the Fe cation site.

The protein belongs to the ribonucleoside diphosphate reductase small chain family. In terms of assembly, tetramer of two alpha (R1) and two beta (R2) subunits. The B1 protein is a dimer of alpha subunits. A radical transfer pathway occurs between Tyr-123 of R2 and R1. Requires Fe cation as cofactor.

The catalysed reaction is a 2'-deoxyribonucleoside 5'-diphosphate + [thioredoxin]-disulfide + H2O = a ribonucleoside 5'-diphosphate + [thioredoxin]-dithiol. Its function is as follows. Provides the precursors necessary for DNA synthesis. Catalyzes the biosynthesis of deoxyribonucleotides from the corresponding ribonucleotides. R2 contains the tyrosyl radical required for catalysis. In Salmonella typhimurium (strain LT2 / SGSC1412 / ATCC 700720), this protein is Ribonucleoside-diphosphate reductase 1 subunit beta (nrdB).